The following is a 172-amino-acid chain: Large ribosomal subunit protein uL10 (172 aa).

The protein belongs to the universal ribosomal protein uL10 family. In terms of assembly, part of the ribosomal stalk of the 50S ribosomal subunit. The N-terminus interacts with L11 and the large rRNA to form the base of the stalk. The C-terminus forms an elongated spine to which L12 dimers bind in a sequential fashion forming a multimeric L10(L12)X complex.

Functionally, forms part of the ribosomal stalk, playing a central role in the interaction of the ribosome with GTP-bound translation factors. This Liberibacter asiaticus (Citrus greening disease) protein is Large ribosomal subunit protein uL10 (rplJ).